A 654-amino-acid polypeptide reads, in one-letter code: tRNA 5-methylaminomethyl-2-thiouridine biosynthesis bifunctional protein MnmC (654 aa).

The interval 1-236 (MPTLLQHAQI…KWEVMSGAYV (236 aa)) is tRNA (mnm(5)s(2)U34)-methyltransferase. An FAD-dependent cmnm(5)s(2)U34 oxidoreductase region spans residues 262–654 (IGAGLAGSSS…FGLRRLIRGK (393 aa)).

The protein in the N-terminal section; belongs to the methyltransferase superfamily. tRNA (mnm(5)s(2)U34)-methyltransferase family. It in the C-terminal section; belongs to the DAO family. FAD serves as cofactor.

It is found in the cytoplasm. The enzyme catalyses 5-aminomethyl-2-thiouridine(34) in tRNA + S-adenosyl-L-methionine = 5-methylaminomethyl-2-thiouridine(34) in tRNA + S-adenosyl-L-homocysteine + H(+). Its function is as follows. Catalyzes the last two steps in the biosynthesis of 5-methylaminomethyl-2-thiouridine (mnm(5)s(2)U) at the wobble position (U34) in tRNA. Catalyzes the FAD-dependent demodification of cmnm(5)s(2)U34 to nm(5)s(2)U34, followed by the transfer of a methyl group from S-adenosyl-L-methionine to nm(5)s(2)U34, to form mnm(5)s(2)U34. The protein is tRNA 5-methylaminomethyl-2-thiouridine biosynthesis bifunctional protein MnmC of Pseudomonas putida (strain ATCC 700007 / DSM 6899 / JCM 31910 / BCRC 17059 / LMG 24140 / F1).